A 938-amino-acid chain; its full sequence is Scm-like with four MBT domains protein 2 (938 aa).

The tract at residues 1-32 (MERYLPVSKKRNSSSSLEKITGSANGNGTLYS) is disordered. Residues 13–30 (SSSSLEKITGSANGNGTL) show a composition bias toward polar residues. MBT repeat units lie at residues 43-143 (FSWG…LRPP), 151-255 (SDWT…MDPP), 265-371 (FEWK…LAPP), and 379-475 (FNWV…LTTP). Residues 742–836 (PEGIPESLPE…TVPTTASSNN (95 aa)) form a disordered region. Basic and acidic residues-rich tracts occupy residues 765-777 (TEQE…DTAR) and 809-822 (RNSE…VERA). Positions 868 to 931 (WSVTDVVRFI…CHQIERVKVA (64 aa)) constitute an SAM domain.

Interacts with YY1. Interacts with methylated histones H3K9me2 and H4K20me2. In terms of tissue distribution, expressed in testis and, at much lower levels, in ovary.

The protein localises to the nucleus. Transcriptional repressor of HOXB13 gene. The chain is Scm-like with four MBT domains protein 2 (Sfmbt2) from Mus musculus (Mouse).